The chain runs to 400 residues: Calsequestrin-2 (400 aa).

An N-terminal signal peptide occupies residues 1–19; sequence MKRTHLFIVGVYVLSSCRA. Position 282 is a phosphotyrosine (Tyr-282). N-linked (GlcNAc...) asparagine glycosylation is present at Asn-335. The interval 365–400 is disordered; that stretch reads VLSGKINTEDDDDEDDDDDNSDEEDNDDSDDDDDDE. The segment covering 373 to 400 has biased composition (acidic residues); that stretch reads EDDDDEDDDDDNSDEEDNDDSDDDDDDE.

It belongs to the calsequestrin family. As to quaternary structure, monomer, homodimer and homooligomer. Mostly monomeric in the absence of calcium. Forms higher oligomers in a calcium-dependent manner. Dimers associate to form tetramers, that then form linear homomer chains. Interacts with ASPH and TRDN. In terms of processing, phosphorylation in the C-terminus, probably by CK2, moderately increases calcium buffering capacity. N-glycosylated.

It localises to the sarcoplasmic reticulum lumen. Calsequestrin is a high-capacity, moderate affinity, calcium-binding protein and thus acts as an internal calcium store in muscle. Calcium ions are bound by clusters of acidic residues at the protein surface, especially at the interface between subunits. Can bind around 60 Ca(2+) ions. Regulates the release of lumenal Ca(2+) via the calcium release channel RYR2; this plays an important role in triggering muscle contraction. Plays a role in excitation-contraction coupling in the heart and in regulating the rate of heart beats. This is Calsequestrin-2 (CASQ2) from Pongo abelii (Sumatran orangutan).